A 291-amino-acid polypeptide reads, in one-letter code: Orotidine 5'-phosphate decarboxylase (291 aa).

The Proton donor role is filled by Lys97.

It belongs to the OMP decarboxylase family. Type 2 subfamily.

It catalyses the reaction orotidine 5'-phosphate + H(+) = UMP + CO2. The protein operates within pyrimidine metabolism; UMP biosynthesis via de novo pathway; UMP from orotate: step 2/2. This Clostridium kluyveri (strain ATCC 8527 / DSM 555 / NBRC 12016 / NCIMB 10680 / K1) protein is Orotidine 5'-phosphate decarboxylase.